The sequence spans 739 residues: Phosphoribosylformylglycinamidine synthase subunit PurL (739 aa).

Residue His-54 is part of the active site. ATP contacts are provided by Tyr-57 and Lys-96. Position 98 (Glu-98) interacts with Mg(2+). Residues 99–102 (SHNH) and Arg-121 contribute to the substrate site. The active-site Proton acceptor is His-100. A Mg(2+)-binding site is contributed by Asp-122. Position 245 (Gln-245) interacts with substrate. Asp-273 is a Mg(2+) binding site. Substrate is bound at residue 317–319 (ESQ). Residues Asp-500 and Gly-537 each contribute to the ATP site. Asn-538 contributes to the Mg(2+) binding site. A substrate-binding site is contributed by Ser-540.

The protein belongs to the FGAMS family. In terms of assembly, monomer. Part of the FGAM synthase complex composed of 1 PurL, 1 PurQ and 2 PurS subunits.

It localises to the cytoplasm. It catalyses the reaction N(2)-formyl-N(1)-(5-phospho-beta-D-ribosyl)glycinamide + L-glutamine + ATP + H2O = 2-formamido-N(1)-(5-O-phospho-beta-D-ribosyl)acetamidine + L-glutamate + ADP + phosphate + H(+). Its pathway is purine metabolism; IMP biosynthesis via de novo pathway; 5-amino-1-(5-phospho-D-ribosyl)imidazole from N(2)-formyl-N(1)-(5-phospho-D-ribosyl)glycinamide: step 1/2. Part of the phosphoribosylformylglycinamidine synthase complex involved in the purines biosynthetic pathway. Catalyzes the ATP-dependent conversion of formylglycinamide ribonucleotide (FGAR) and glutamine to yield formylglycinamidine ribonucleotide (FGAM) and glutamate. The FGAM synthase complex is composed of three subunits. PurQ produces an ammonia molecule by converting glutamine to glutamate. PurL transfers the ammonia molecule to FGAR to form FGAM in an ATP-dependent manner. PurS interacts with PurQ and PurL and is thought to assist in the transfer of the ammonia molecule from PurQ to PurL. The polypeptide is Phosphoribosylformylglycinamidine synthase subunit PurL (Bacillus cereus (strain G9842)).